Reading from the N-terminus, the 427-residue chain is Large ribosomal subunit protein uL4 (427 aa).

Position 2 is an N-acetylalanine (Ala-2). N6-acetyllysine is present on Lys-14. At Arg-97 the chain carries Omega-N-methylarginine. Lys-106 bears the N6-acetyllysine mark. Lys-239 participates in a covalent cross-link: Glycyl lysine isopeptide (Lys-Gly) (interchain with G-Cter in SUMO2). The residue at position 259 (Lys-259) is an N6-acetyllysine. A Phosphothreonine modification is found at Thr-266. A phosphoserine mark is found at Ser-290 and Ser-295. Arg-300 bears the Citrulline mark. Lys-327 is covalently cross-linked (Glycyl lysine isopeptide (Lys-Gly) (interchain with G-Cter in SUMO2)). An N6-acetyllysine mark is found at Lys-333 and Lys-353. Lys-364 is subject to N6-acetyllysine; alternate. A Glycyl lysine isopeptide (Lys-Gly) (interchain with G-Cter in SUMO1); alternate cross-link involves residue Lys-364. Ser-365 carries the post-translational modification Phosphoserine. The tract at residues 369–427 (AAVAGKKPVVGKKGKKVAVGVKKQKKPLVGKKAAATKKPAPEKKSTEKKPTTEEKKPAA) is disordered. The span at 377-397 (VVGKKGKKVAVGVKKQKKPLV) shows a compositional bias: basic residues. Basic and acidic residues predominate over residues 407–427 (PAPEKKSTEKKPTTEEKKPAA).

The protein belongs to the universal ribosomal protein uL4 family. Component of the large ribosomal subunit. May bind IPO9 with low affinity. Interacts with RBM3. Post-translationally, citrullinated by PADI4.

It is found in the cytoplasm. In terms of biological role, component of the large ribosomal subunit. The ribosome is a large ribonucleoprotein complex responsible for the synthesis of proteins in the cell. In Macaca fascicularis (Crab-eating macaque), this protein is Large ribosomal subunit protein uL4 (RPL4).